The chain runs to 238 residues: Probable transcriptional regulatory protein TC_0742 (238 aa).

A disordered region spans residues 1 to 21 (MAGHSKWANTKHRKERADHKK). The segment covering 9–21 (NTKHRKERADHKK) has biased composition (basic residues).

The protein belongs to the TACO1 family.

It is found in the cytoplasm. The sequence is that of Probable transcriptional regulatory protein TC_0742 from Chlamydia muridarum (strain MoPn / Nigg).